We begin with the raw amino-acid sequence, 276 residues long: Large ribosomal subunit protein uL2 (276 aa).

2 disordered regions span residues 26-45 (RSTP…GRNC) and 224-276 (AMNP…RGQK). A compositionally biased stretch (basic residues) spans 259 to 276 (RDKKKASSKLIIKRRGQK).

This sequence belongs to the universal ribosomal protein uL2 family. In terms of assembly, part of the 50S ribosomal subunit. Forms a bridge to the 30S subunit in the 70S ribosome.

Functionally, one of the primary rRNA binding proteins. Required for association of the 30S and 50S subunits to form the 70S ribosome, for tRNA binding and peptide bond formation. It has been suggested to have peptidyltransferase activity; this is somewhat controversial. Makes several contacts with the 16S rRNA in the 70S ribosome. The protein is Large ribosomal subunit protein uL2 of Oleidesulfovibrio alaskensis (strain ATCC BAA-1058 / DSM 17464 / G20) (Desulfovibrio alaskensis).